The primary structure comprises 358 residues: Diels-Alderase phmD (358 aa).

Belongs to the Diels-Alderase family.

Its pathway is mycotoxin biosynthesis. Functionally, diels-Alderase; part of the gene cluster that mediates the biosynthesis of the mycotoxins phomacins, leucine-derived cytochalasans with potent actin polymerization-inhibitory activities and monocot-specific antigerminative activities. The first step in the pathway is catalyzed by the hybrid PKS-NRPS phmA, assisted by the enoyl reductase phmE, that are responsible for fusion of the leucine precursor and the polyketide backbone to produce a 2-pyrrolidone intermediate. The polyketide synthase module (PKS) of phmA is responsible for the synthesis of the polyketide backbone and the downstream nonribosomal peptide synthetase (NRPS) amidates the carboxyl end of the polyketide with the leucine precursor. Because phmA lacks a designated enoylreductase (ER) domain, the required activity is provided the enoyl reductase phmE. Reduction by the hydrolyase phmG, followed by dehydration and intra-molecular Diels-Alder cyclization by the Diels-Alderase phmD then yield the required isoindolone-fused macrocycle. A number of oxidative steps catalyzed by the tailoring cytochrome P450 monooxygenase phmB, the FAD-linked oxidoreductase phmC and the short-chain dehydrogenase/reductase phmF, are further required to afford the final products, phomacin D and phomacin E. This Phaeosphaeria nodorum (strain SN15 / ATCC MYA-4574 / FGSC 10173) (Glume blotch fungus) protein is Diels-Alderase phmD.